The following is a 134-amino-acid chain: Small ribosomal subunit protein uS12 (134 aa).

A disordered region spans residues 1–27 (MPTIQQLVRKGRESFADKSKSPALNSC). The span at 10-20 (KGRESFADKSK) shows a compositional bias: basic and acidic residues. A 3-methylthioaspartic acid modification is found at Asp-89. The segment at 103–134 (DTAGVNGRTQRRSKYGAKRPKPGQAPAAKGKK) is disordered. Positions 111-123 (TQRRSKYGAKRPK) are enriched in basic residues. The segment covering 124–134 (PGQAPAAKGKK) has biased composition (low complexity).

This sequence belongs to the universal ribosomal protein uS12 family. In terms of assembly, part of the 30S ribosomal subunit. Contacts proteins S8 and S17. May interact with IF1 in the 30S initiation complex.

Functionally, with S4 and S5 plays an important role in translational accuracy. In terms of biological role, interacts with and stabilizes bases of the 16S rRNA that are involved in tRNA selection in the A site and with the mRNA backbone. Located at the interface of the 30S and 50S subunits, it traverses the body of the 30S subunit contacting proteins on the other side and probably holding the rRNA structure together. The combined cluster of proteins S8, S12 and S17 appears to hold together the shoulder and platform of the 30S subunit. In Porphyromonas gingivalis (strain ATCC 33277 / DSM 20709 / CIP 103683 / JCM 12257 / NCTC 11834 / 2561), this protein is Small ribosomal subunit protein uS12.